We begin with the raw amino-acid sequence, 127 residues long: Small ribosomal subunit protein uS11 (127 aa).

Belongs to the universal ribosomal protein uS11 family. Part of the 30S ribosomal subunit. Interacts with proteins S7 and S18. Binds to IF-3.

Functionally, located on the platform of the 30S subunit, it bridges several disparate RNA helices of the 16S rRNA. Forms part of the Shine-Dalgarno cleft in the 70S ribosome. This chain is Small ribosomal subunit protein uS11, found in Rickettsia rickettsii (strain Iowa).